The sequence spans 405 residues: Patatin-like protein 2 (405 aa).

Residues 24 to 230 (LSIDGGGVRG…AANNPTLCAM (207 aa)) enclose the PNPLA domain. The GXGXXG signature appears at 28–33 (GGGVRG). The GXSXG signature appears at 66–70 (GTSTG). The Nucleophile role is filled by serine 68. The active-site Proton acceptor is the aspartate 217. The DGA/G signature appears at 217–219 (DGG).

This sequence belongs to the patatin family.

In terms of biological role, possesses non-specific lipolytic acyl hydrolase (LAH) activity. Hydrolyzes phospholipids as well as galactolipids. May play a role in disease resistance. This Oryza sativa subsp. indica (Rice) protein is Patatin-like protein 2 (PLP2).